Consider the following 158-residue polypeptide: Dysbindin domain-containing protein 1 (158 aa).

Disordered stretches follow at residues 1 to 50 (MEPP…VPAP) and 93 to 158 (ADSD…PQED). A phosphoserine mark is found at Ser95 and Ser119. A compositionally biased stretch (basic and acidic residues) spans 125-141 (TRAEQSHEKQPLGDPER).

It belongs to the dysbindin family.

The polypeptide is Dysbindin domain-containing protein 1 (DBNDD1) (Homo sapiens (Human)).